Consider the following 415-residue polypeptide: MQMSYAIRCAFYQLLLAALMLVAMLQLLYLSLLSGLHGQEEQDQYFEFFPPSPRSVDQVKAQLRTALASGGVLDASGDYRVYRGLLKTTMDPNDVILATHASVDNLLHLSGLLERWEGPLSVSVFAATKEEAQLATVLTYALSSHCPDMRARVAMHLVCPSRYEAAVPDPREPGEFALLRSCQEVFDKLARVAQPGVNYALGTNVSYPNNLLRNLAREGANYALVIDVDMVPSEGLWRSLREMLDQSKQWAGTALVVPAFEIRRARRMPMNKNELLQLYQVGEVRPFYYGLCTPCQAPTNYSRWVNLPEETLLRPAYVVPWQDPWEPFYVAGGKVPTFDERFRQYGFNRISQACELHVAGFDFEVLNEGFLVHKGFKEVLKFHPQKEAENQHNKILYRQFKQELKAKYPDSPRHC.

Residues methionine 1–arginine 8 lie on the Cytoplasmic side of the membrane. Residues cysteine 9–leucine 36 form a helical; Signal-anchor for type II membrane protein membrane-spanning segment. Over histidine 37–cysteine 415 the chain is Lumenal. Asparagine 204 carries N-linked (GlcNAc...) asparagine glycosylation. Positions 227 and 229 each coordinate Mn(2+). A glycan (N-linked (GlcNAc...) asparagine) is linked at asparagine 300.

The protein belongs to the glycosyltransferase 49 family. Interacts with LARGE1 and LARGE2. Requires Mn(2+) as cofactor.

It localises to the golgi apparatus membrane. It catalyses the reaction 3-O-[beta-D-Xyl-(1-&gt;4)-Rib-ol-P-Rib-ol-P-3-beta-D-GalNAc-(1-&gt;3)-beta-D-GlcNAc-(1-&gt;4)-(O-6-P-alpha-D-Man)]-Thr-[protein] + UDP-alpha-D-glucuronate = 3-O-[beta-D-GlcA-(1-&gt;3)-beta-D-Xyl-(1-&gt;4)-Rib-ol-P-Rib-ol-P-3-beta-D-GalNAc-(1-&gt;3)-beta-D-GlcNAc-(1-&gt;4)-(O-6-P-alpha-D-Man)]-Thr-[protein] + UDP + H(+). It functions in the pathway protein modification; protein glycosylation. Beta-1,4-glucuronyltransferase involved in O-mannosylation of alpha-dystroglycan (DAG1). Transfers a glucuronic acid (GlcA) residue onto a xylose (Xyl) acceptor to produce the glucuronyl-beta-1,4-xylose-beta disaccharide primer, which is further elongated by LARGE1, during synthesis of phosphorylated O-mannosyl glycan. Phosphorylated O-mannosyl glycan is a carbohydrate structure present in alpha-dystroglycan (DAG1), which is required for binding laminin G-like domain-containing extracellular proteins with high affinity. Required for axon guidance; via its function in O-mannosylation of alpha-dystroglycan (DAG1). In Bos taurus (Bovine), this protein is Beta-1,4-glucuronyltransferase 1.